Here is a 225-residue protein sequence, read N- to C-terminus: UPF0758 protein XOO0495 (225 aa).

An MPN domain is found at 102–224; that stretch reads ALSDPPSVGR…PVSLAERGWL (123 aa). The Zn(2+) site is built by His173, His175, and Asp186. The short motif at 173-186 is the JAMM motif element; it reads HNHPSGNPEPSKAD.

It belongs to the UPF0758 family.

This is UPF0758 protein XOO0495 from Xanthomonas oryzae pv. oryzae (strain KACC10331 / KXO85).